The sequence spans 344 residues: Glucan endo-1,3-beta-glucosidase (344 aa).

Positions 1–27 (MALTRNRPFVVVLLLGFVIMSTITIGA) are cleaved as a signal peptide. The active-site Proton donor is E123. Catalysis depends on E268, which acts as the Nucleophile.

It belongs to the glycosyl hydrolase 17 family.

It catalyses the reaction Hydrolysis of (1-&gt;3)-beta-D-glucosidic linkages in (1-&gt;3)-beta-D-glucans.. Implicated in the defense of plants against pathogens. In Vitis vinifera (Grape), this protein is Glucan endo-1,3-beta-glucosidase.